Reading from the N-terminus, the 119-residue chain is Ribonuclease P protein component (119 aa).

Belongs to the RnpA family. In terms of assembly, consists of a catalytic RNA component (M1 or rnpB) and a protein subunit.

The catalysed reaction is Endonucleolytic cleavage of RNA, removing 5'-extranucleotides from tRNA precursor.. Its function is as follows. RNaseP catalyzes the removal of the 5'-leader sequence from pre-tRNA to produce the mature 5'-terminus. It can also cleave other RNA substrates such as 4.5S RNA. The protein component plays an auxiliary but essential role in vivo by binding to the 5'-leader sequence and broadening the substrate specificity of the ribozyme. This Streptococcus gordonii (strain Challis / ATCC 35105 / BCRC 15272 / CH1 / DL1 / V288) protein is Ribonuclease P protein component.